Reading from the N-terminus, the 143-residue chain is Flagellar assembly factor FliW (143 aa).

The protein belongs to the FliW family. In terms of assembly, interacts with translational regulator CsrA and flagellin(s).

The protein resides in the cytoplasm. Functionally, acts as an anti-CsrA protein, binds CsrA and prevents it from repressing translation of its target genes, one of which is flagellin. Binds to flagellin and participates in the assembly of the flagellum. This Bacillus licheniformis (strain ATCC 14580 / DSM 13 / JCM 2505 / CCUG 7422 / NBRC 12200 / NCIMB 9375 / NCTC 10341 / NRRL NRS-1264 / Gibson 46) protein is Flagellar assembly factor FliW.